Reading from the N-terminus, the 262-residue chain is Electron transfer flavoprotein beta subunit lysine methyltransferase (262 aa).

The transit peptide at 1–38 (MALSLGWKAHRNHCGLLLQALRSSGLLLFPCGQCPWRG) directs the protein to the mitochondrion.

It belongs to the methyltransferase superfamily. ETFBKMT family. Interacts with HSPD1; this protein may possibly be a methylation substrate.

The protein resides in the cytoplasm. It is found in the mitochondrion matrix. It carries out the reaction L-lysyl-[protein] + 3 S-adenosyl-L-methionine = N(6),N(6),N(6)-trimethyl-L-lysyl-[protein] + 3 S-adenosyl-L-homocysteine + 3 H(+). Its function is as follows. Protein-lysine methyltransferase that selectively trimethylates the flavoprotein ETFB in mitochondria. Thereby, may negatively regulate the function of ETFB in electron transfer from Acyl-CoA dehydrogenases to the main respiratory chain. This chain is Electron transfer flavoprotein beta subunit lysine methyltransferase, found in Homo sapiens (Human).